A 458-amino-acid polypeptide reads, in one-letter code: Maturase-like protein 1 (458 aa).

It to group II intron maturases.

The protein localises to the plastid. It localises to the chloroplast. Could be required for group III intron excision. This Euglena gracilis protein is Maturase-like protein 1 (mat1).